The sequence spans 860 residues: DDB1- and CUL4-associated factor 6 (860 aa).

WD repeat units lie at residues 49-88 (VHDG…VLTT), 92-133 (GHRA…ETNR), 139-179 (CHYG…SCTK), 189-229 (NCRR…TRAT), and 251-290 (NKSC…AREL). Basic and acidic residues-rich tracts occupy residues 288-303 (RELK…EELR) and 312-334 (LRGD…RDGE). 4 disordered regions span residues 288–340 (RELK…PNVS), 355–392 (EASE…SPDL), 407–490 (QFLQ…TTST), and 502–675 (IASS…GPGD). Ser-336 bears the Phosphoserine mark. Polar residues-rich tracts occupy residues 379–388 (DISTLPTVPS) and 409–421 (LQPS…SAQA). Over residues 422 to 441 (HSTSSPTESPHSTPLLSSPD) the composition is skewed to low complexity. Basic and acidic residues predominate over residues 457–467 (HQSDNNNEKLS). The segment covering 480–490 (HYSTEGTTTST) has biased composition (polar residues). Low complexity predominate over residues 502-511 (IASSSRGIGS). A compositionally biased stretch (basic and acidic residues) spans 535–549 (SETKAPEESSEDVTK). A compositionally biased stretch (low complexity) spans 614 to 626 (TSTESATNENNTN). The span at 627-636 (PEPQFQTEAT) shows a compositional bias: polar residues. Phosphoserine is present on Ser-649. The residue at position 654 (Thr-654) is a Phosphothreonine. Ser-657 carries the post-translational modification Phosphoserine. The 30-residue stretch at 676–705 (RRSAVARIQEFFRRRKERKEMEELDTLNIR) folds into the IQ domain. 2 WD repeats span residues 718–756 (NSRT…HLML) and 759–798 (ADNH…RIFN). Residues Ser-847 and Ser-850 each carry the phosphoserine modification.

As to quaternary structure, interacts with the nuclear receptors NR3C1 and AR in the presence of ligand. Interacts with DDB1, CUL4A and CUL4B. As to expression, highly expressed in skeletal muscle and testis. Expressed to a lesser degree in heart, prostate, and adrenal gland.

It localises to the nucleus. It participates in protein modification; protein ubiquitination. In terms of biological role, ligand-dependent coactivator of nuclear receptors. Enhance transcriptional activity of the nuclear receptors NR3C1 and AR. May function as a substrate receptor for CUL4-DDB1 E3 ubiquitin-protein ligase complex. The sequence is that of DDB1- and CUL4-associated factor 6 (DCAF6) from Homo sapiens (Human).